The primary structure comprises 487 residues: Protein Optix (487 aa).

The segment at residues 154–214 is a DNA-binding region (homeobox); that stretch reads WDGEQKTHCF…KNRRQRDRAA (61 aa). Disordered stretches follow at residues 182 to 330 and 443 to 463; these read NPTK…GAGP and ASVGGGGGNQHHEPTTTGYHH. Residues 255-277 show a composition bias toward polar residues; that stretch reads GTHSPVPSSLQLQHSPGSTSNGA. Residues 278-293 show a composition bias toward basic and acidic residues; that stretch reads NDREESLSVDDDKPRD. A compositionally biased stretch (low complexity) spans 294–312; that stretch reads LSGSLPLPLSLPLPLASPT. Residues 321 to 330 show a composition bias toward gly residues; it reads GYGGGAGAGP.

It belongs to the SIX/Sine oculis homeobox family. Expressed during early development of the head. First expressed in a band around the anterior end of stage 5 blastoderm embryo, at 93% to 85% egg length. By gastrula stage, site of expression shifts to the dorsal-anterior region. At stage 12, expression is found in the clypeolabrum, the stomodaeum, and in ectoderm dorsal to the future supraesophageal ganglion.

It is found in the nucleus. May be involved in head or eye development; development of the clypeolabrum and several head sensory organs. In Drosophila melanogaster (Fruit fly), this protein is Protein Optix (Optix).